Reading from the N-terminus, the 84-residue chain is Large ribosomal subunit protein bL27 (84 aa).

Positions 1–22 (MAHKKAGGSTRNGRDSESKRLG) are disordered.

This sequence belongs to the bacterial ribosomal protein bL27 family.

The polypeptide is Large ribosomal subunit protein bL27 (Shewanella oneidensis (strain ATCC 700550 / JCM 31522 / CIP 106686 / LMG 19005 / NCIMB 14063 / MR-1)).